The chain runs to 239 residues: Uridylate kinase (239 aa).

13–16 (KLSG) contributes to the ATP binding site. Glycine 55 serves as a coordination point for UMP. 2 residues coordinate ATP: glycine 56 and arginine 60. UMP-binding positions include aspartate 75 and 136 to 143 (TGNPFFTT). 4 residues coordinate ATP: threonine 163, asparagine 164, tyrosine 169, and aspartate 172.

This sequence belongs to the UMP kinase family. In terms of assembly, homohexamer.

It localises to the cytoplasm. It catalyses the reaction UMP + ATP = UDP + ADP. It participates in pyrimidine metabolism; CTP biosynthesis via de novo pathway; UDP from UMP (UMPK route): step 1/1. Its activity is regulated as follows. Inhibited by UTP. Functionally, catalyzes the reversible phosphorylation of UMP to UDP. This Neisseria gonorrhoeae (strain ATCC 700825 / FA 1090) protein is Uridylate kinase.